The following is an 81-amino-acid chain: Small ribosomal subunit protein bS18 (81 aa).

Belongs to the bacterial ribosomal protein bS18 family. In terms of assembly, part of the 30S ribosomal subunit. Forms a tight heterodimer with protein bS6.

Its function is as follows. Binds as a heterodimer with protein bS6 to the central domain of the 16S rRNA, where it helps stabilize the platform of the 30S subunit. This chain is Small ribosomal subunit protein bS18, found in Syntrophobacter fumaroxidans (strain DSM 10017 / MPOB).